Consider the following 579-residue polypeptide: Fatty-acid amide hydrolase 1 (579 aa).

A helical transmembrane segment spans residues 9–29; that stretch reads ALPGASGVALACCFVAAAVAL. The Cytoplasmic portion of the chain corresponds to 30–403; it reads RWSGRRTARG…GDFVDPCLGD (374 aa). The Charge relay system role is filled by Lys-142. Residues Met-191, Ser-217, and 238-241 each bind substrate; that span reads IGGS. The active-site Charge relay system is the Ser-217. The active-site Acyl-ester intermediate is the Ser-241. Ser-241 is subject to Phosphoserine. The stretch at 404–433 is an intramembrane region; it reads LVSILKLPQWLKGLLAFLVKPLLPRLSAFL. At 434 to 579 the chain is on the cytoplasmic side; the sequence is SNMKSRSAGK…RLMTPEKQSS (146 aa).

This sequence belongs to the amidase family. Homodimer. In terms of tissue distribution, highly expressed in the brain, small intestine, pancreas, skeletal muscle and testis. Also expressed in the kidney, liver, lung, placenta and prostate.

It localises to the endomembrane system. The protein localises to the cytoplasm. It is found in the cytoskeleton. The catalysed reaction is N-(5Z,8Z,11Z,14Z-eicosatetraenoyl)-ethanolamine + H2O = ethanolamine + (5Z,8Z,11Z,14Z)-eicosatetraenoate. It catalyses the reaction (9Z)-octadecenamide + H2O = (9Z)-octadecenoate + NH4(+). The enzyme catalyses 2-(5Z,8Z,11Z,14Z-eicosatetraenoyl)-glycerol + H2O = glycerol + (5Z,8Z,11Z,14Z)-eicosatetraenoate + H(+). It carries out the reaction N-(9Z-octadecenoyl) ethanolamine + H2O = ethanolamine + (9Z)-octadecenoate. The catalysed reaction is N-hexadecanoylethanolamine + H2O = ethanolamine + hexadecanoate. It catalyses the reaction hexadecanamide + H2O = hexadecanoate + NH4(+). The enzyme catalyses tetradecamide + H2O = tetradecanoate + NH4(+). It carries out the reaction N-(9Z-octadecenoyl)-taurine + H2O = taurine + (9Z)-octadecenoate. The catalysed reaction is (9Z,12Z,15Z)-octadecatrienamide + H2O = (9Z,12Z,15Z)-octadecatrienoate + NH4(+). It catalyses the reaction (5Z,8Z,11Z,14Z)-eicosatetraenamide + H2O = (5Z,8Z,11Z,14Z)-eicosatetraenoate + NH4(+). The enzyme catalyses (6Z)-octadecenamide + H2O = (6Z)-octadecenoate + NH4(+). It carries out the reaction (15Z)-tetracosenamide + H2O = (15Z)-tetracosenoate + NH4(+). The catalysed reaction is (8Z,11Z,14Z)-eicosatrienamide + H2O = (8Z,11Z,14Z)-eicosatrienoate + NH4(+). It catalyses the reaction (11Z,14Z,17Z)-eicosatrienamide + H2O = (11Z,14Z,17Z)-eicosatrienoate + NH4(+). The enzyme catalyses (11Z,14Z)-eicosadienamide + H2O = (11Z,14Z)-eicosadienoate + NH4(+). It carries out the reaction (9Z,12Z)-octadecadienamide + H2O = (9Z,12Z)-octadecadienoate + NH4(+). The catalysed reaction is 1-O-methyl-(5Z,8Z,11Z,14Z)-eicosatetraenoate + H2O = methanol + (5Z,8Z,11Z,14Z)-eicosatetraenoate + H(+). It catalyses the reaction (11Z)-eicosenamide + H2O = (11Z)-eicosenoate + NH4(+). The enzyme catalyses N-(9Z-hexadecenoyl) ethanolamine + H2O = (9Z)-hexadecenoate + ethanolamine. It carries out the reaction N-octadecanoyl ethanolamine + H2O = octadecanoate + ethanolamine. The catalysed reaction is N-docosanoyl-ethanolamine + H2O = docosanoate + ethanolamine. It catalyses the reaction N-tetracosanoyl-taurine + H2O = tetracosanoate + taurine. The enzyme catalyses N-(15Z-tetracosenoyl)-ethanolamine + H2O = (15Z)-tetracosenoate + ethanolamine. It carries out the reaction N-docosanoyl-taurine + H2O = docosanoate + taurine. The catalysed reaction is N-(15Z-tetracosenoyl)-taurine + H2O = (15Z)-tetracosenoate + taurine. It catalyses the reaction N-tricosanoyl-taurine + H2O = tricosanoate + taurine. The enzyme catalyses (9Z)-octadecenoate + glycine = N-(9Z-octadecenoyl)glycine + H2O. It carries out the reaction N-(5Z,8Z,11Z,14Z)-eicosatetraenoyl-glycine + H2O = (5Z,8Z,11Z,14Z)-eicosatetraenoate + glycine. The catalysed reaction is N-(5Z,8Z,11Z,14Z-eicosatetraenoyl)-L-serine + H2O = (5Z,8Z,11Z,14Z)-eicosatetraenoate + L-serine. Its activity is regulated as follows. Inhibited by O-aryl carbamates and alpha-keto heterocycles. Inhibited by trifluoromethyl ketone. Catalyzes the hydrolysis of endogenous amidated lipids like the sleep-inducing lipid oleamide ((9Z)-octadecenamide), the endocannabinoid anandamide (N-(5Z,8Z,11Z,14Z-eicosatetraenoyl)-ethanolamine), as well as other fatty amides, to their corresponding fatty acids, thereby regulating the signaling functions of these molecules. Hydrolyzes polyunsaturated substrate anandamide preferentially as compared to monounsaturated substrates. It can also catalyze the hydrolysis of the endocannabinoid 2-arachidonoylglycerol (2-(5Z,8Z,11Z,14Z-eicosatetraenoyl)-glycerol). FAAH cooperates with PM20D1 in the hydrolysis of amino acid-conjugated fatty acids such as N-fatty acyl glycine and N-fatty acyl-L-serine, thereby acting as a physiological regulator of specific subsets of intracellular, but not of extracellular, N-fatty acyl amino acids. This chain is Fatty-acid amide hydrolase 1 (FAAH), found in Homo sapiens (Human).